Here is a 267-residue protein sequence, read N- to C-terminus: 2-keto-3-deoxy-L-rhamnonate aldolase (267 aa).

Catalysis depends on His-49, which acts as the Proton acceptor. Gln-151 is a substrate binding site. Residue Glu-153 coordinates Mg(2+). Ala-178 and Asp-179 together coordinate substrate. Residue Asp-179 coordinates Mg(2+).

Belongs to the HpcH/HpaI aldolase family. KDR aldolase subfamily. Homohexamer. Mg(2+) is required as a cofactor.

The enzyme catalyses 2-dehydro-3-deoxy-L-rhamnonate = (S)-lactaldehyde + pyruvate. In terms of biological role, catalyzes the reversible retro-aldol cleavage of 2-keto-3-deoxy-L-rhamnonate (KDR) to pyruvate and lactaldehyde. This Escherichia coli O6:K15:H31 (strain 536 / UPEC) protein is 2-keto-3-deoxy-L-rhamnonate aldolase.